The chain runs to 150 residues: Thyroid hormone-inducible hepatic protein (150 aa).

Residues 83–105 (KVAGNEGSEAENEAAETEEAEED) form a disordered region. S90 carries the post-translational modification Phosphoserine. Acidic residues predominate over residues 90 to 105 (SEAENEAAETEEAEED).

This sequence belongs to the SPOT14 family. As to quaternary structure, homodimer. Heterodimer with MID1IP1. Interacts with THRB and PLAGL1. As to expression, highly expressed in liver, lactating mammary gland, epididymal, retroperitoneal and brown fat. Mainly expressed in tissues that synthesize triglycerides.

It is found in the nucleus. Its subcellular location is the cytoplasm. Functionally, plays a role in the regulation of lipogenesis, especially in lactating mammary gland. Important for the biosynthesis of triglycerides with medium-length fatty acid chains. May modulate lipogenesis by interacting with MID1IP1 and preventing its interaction with ACACA. May function as transcriptional coactivator. May modulate the transcription factor activity of THRB. In Rattus norvegicus (Rat), this protein is Thyroid hormone-inducible hepatic protein (Thrsp).